Here is a 186-residue protein sequence, read N- to C-terminus: Elongation factor P (186 aa).

This sequence belongs to the elongation factor P family.

It is found in the cytoplasm. It participates in protein biosynthesis; polypeptide chain elongation. Functionally, involved in peptide bond synthesis. Stimulates efficient translation and peptide-bond synthesis on native or reconstituted 70S ribosomes in vitro. Probably functions indirectly by altering the affinity of the ribosome for aminoacyl-tRNA, thus increasing their reactivity as acceptors for peptidyl transferase. The chain is Elongation factor P from Shewanella denitrificans (strain OS217 / ATCC BAA-1090 / DSM 15013).